The primary structure comprises 312 residues: 4-diphosphocytidyl-2-C-methyl-D-erythritol kinase (312 aa).

Lys-16 is a catalytic residue. 101-111 serves as a coordination point for ATP; sequence PIGAGLAGGSS. Asp-143 is an active-site residue.

The protein belongs to the GHMP kinase family. IspE subfamily.

The catalysed reaction is 4-CDP-2-C-methyl-D-erythritol + ATP = 4-CDP-2-C-methyl-D-erythritol 2-phosphate + ADP + H(+). It functions in the pathway isoprenoid biosynthesis; isopentenyl diphosphate biosynthesis via DXP pathway; isopentenyl diphosphate from 1-deoxy-D-xylulose 5-phosphate: step 3/6. In terms of biological role, catalyzes the phosphorylation of the position 2 hydroxy group of 4-diphosphocytidyl-2C-methyl-D-erythritol. This Prochlorococcus marinus subsp. pastoris (strain CCMP1986 / NIES-2087 / MED4) protein is 4-diphosphocytidyl-2-C-methyl-D-erythritol kinase.